The sequence spans 351 residues: Anthranilate phosphoribosyltransferase (351 aa).

5-phospho-alpha-D-ribose 1-diphosphate-binding positions include Gly-89, 92–93, Thr-97, 99–102, 117–125, and Ser-129; these read GD, NIST, and KHGNRSASG. Gly-89 is a binding site for anthranilate. Mg(2+) is bound at residue Ser-101. Asn-120 contacts anthranilate. Arg-175 is an anthranilate binding site. The Mg(2+) site is built by Asp-234 and Glu-235.

Belongs to the anthranilate phosphoribosyltransferase family. In terms of assembly, homodimer. The cofactor is Mg(2+).

The enzyme catalyses N-(5-phospho-beta-D-ribosyl)anthranilate + diphosphate = 5-phospho-alpha-D-ribose 1-diphosphate + anthranilate. It participates in amino-acid biosynthesis; L-tryptophan biosynthesis; L-tryptophan from chorismate: step 2/5. Functionally, catalyzes the transfer of the phosphoribosyl group of 5-phosphorylribose-1-pyrophosphate (PRPP) to anthranilate to yield N-(5'-phosphoribosyl)-anthranilate (PRA). In Synechococcus sp. (strain CC9902), this protein is Anthranilate phosphoribosyltransferase.